The chain runs to 462 residues: Glutamate decarboxylase alpha (462 aa).

At Lys-273 the chain carries N6-(pyridoxal phosphate)lysine.

This sequence belongs to the group II decarboxylase family. Pyridoxal 5'-phosphate is required as a cofactor.

It carries out the reaction L-glutamate + H(+) = 4-aminobutanoate + CO2. Its function is as follows. Converts internalized glutamate to GABA and increases the internal pH. Involved in glutamate-dependent acid resistance in gastric fluid. This is Glutamate decarboxylase alpha (gadA) from Listeria monocytogenes serovar 1/2a (strain ATCC BAA-679 / EGD-e).